A 360-amino-acid chain; its full sequence is Alpha-ketoglutarate dependent kainoid synthase (360 aa).

Residues 200 to 310 (MFFSNRIYPE…RASLISFYEP (111 aa)) enclose the Fe2OG dioxygenase domain. Fe cation-binding residues include His225, Asp227, and His286. Arg301 contacts 2-oxoglutarate.

This sequence belongs to the iron/ascorbate-dependent oxidoreductase family. Fe(2+) is required as a cofactor.

The enzyme catalyses prekainate + 2-oxoglutarate + O2 = kainate + succinate + CO2 + H2O. It catalyses the reaction prekainate + 2-oxoglutarate + O2 + H(+) = kainate lactone + succinate + CO2 + H2O. The protein operates within secondary metabolite biosynthesis. Its activity is regulated as follows. Inhibited by the iron chelator EDTA. In terms of biological role, iron/ascorbate-dependent oxidoreductase: part of the gene cluster that mediates the biosynthesis of kainic acid (KA) and derivatives, natural products with neurochemical activity acting as ionotropic glutamate receptor (iGluR) agonists, thus being neurotoxins. Catalyzes the conversion of prekainic acid to kainic acid and kainic acid lactone. The polypeptide is Alpha-ketoglutarate dependent kainoid synthase (Digenea simplex (Marine red alga)).